Here is a 781-residue protein sequence, read N- to C-terminus: Lon protease (781 aa).

The 199-residue stretch at 16–214 folds into the Lon N-terminal domain; sequence ANVLVTRGIV…KILSFTIDER (199 aa). 365-372 contributes to the ATP binding site; it reads GPPGVGKT. Positions 601–781 constitute a Lon proteolytic domain; it reads EYMPGVVNGM…YDDVYNRLFK (181 aa). Active-site residues include Ser688 and Lys731.

This sequence belongs to the peptidase S16 family. In terms of assembly, homohexamer. Organized in a ring with a central cavity.

The protein resides in the cytoplasm. The catalysed reaction is Hydrolysis of proteins in presence of ATP.. Functionally, ATP-dependent serine protease that mediates the selective degradation of mutant and abnormal proteins as well as certain short-lived regulatory proteins. Required for cellular homeostasis and for survival from DNA damage and developmental changes induced by stress. Degrades polypeptides processively to yield small peptide fragments that are 5 to 10 amino acids long. Binds to DNA in a double-stranded, site-specific manner. The sequence is that of Lon protease from Malacoplasma penetrans (strain HF-2) (Mycoplasma penetrans).